The primary structure comprises 117 residues: Large ribosomal subunit protein bL20 (117 aa).

Belongs to the bacterial ribosomal protein bL20 family.

Its function is as follows. Binds directly to 23S ribosomal RNA and is necessary for the in vitro assembly process of the 50S ribosomal subunit. It is not involved in the protein synthesizing functions of that subunit. In Photobacterium profundum (strain SS9), this protein is Large ribosomal subunit protein bL20.